Consider the following 134-residue polypeptide: Probable salivary secreted peptide (134 aa).

Residues 1-24 (MGAQKTIAYLAIIAIAVIFAQVNT) form the signal peptide.

The protein resides in the secreted. The protein is Probable salivary secreted peptide of Bombus ignitus (Bumblebee).